A 102-amino-acid chain; its full sequence is Small ribosomal subunit protein uS10 (102 aa).

The protein belongs to the universal ribosomal protein uS10 family. As to quaternary structure, part of the 30S ribosomal subunit.

Functionally, involved in the binding of tRNA to the ribosomes. The polypeptide is Small ribosomal subunit protein uS10 (Caulobacter sp. (strain K31)).